Reading from the N-terminus, the 460-residue chain is ATP synthase subunit beta (460 aa).

Residue 150-157 participates in ATP binding; the sequence is GGAGVGKT.

It belongs to the ATPase alpha/beta chains family. In terms of assembly, F-type ATPases have 2 components, CF(1) - the catalytic core - and CF(0) - the membrane proton channel. CF(1) has five subunits: alpha(3), beta(3), gamma(1), delta(1), epsilon(1). CF(0) has three main subunits: a(1), b(2) and c(9-12). The alpha and beta chains form an alternating ring which encloses part of the gamma chain. CF(1) is attached to CF(0) by a central stalk formed by the gamma and epsilon chains, while a peripheral stalk is formed by the delta and b chains.

The protein resides in the cell inner membrane. The catalysed reaction is ATP + H2O + 4 H(+)(in) = ADP + phosphate + 5 H(+)(out). In terms of biological role, produces ATP from ADP in the presence of a proton gradient across the membrane. The catalytic sites are hosted primarily by the beta subunits. The sequence is that of ATP synthase subunit beta from Enterobacter sp. (strain 638).